A 365-amino-acid polypeptide reads, in one-letter code: Phosphate acyltransferase (365 aa).

The protein belongs to the PlsX family. In terms of assembly, homodimer. Probably interacts with PlsY.

It localises to the cytoplasm. The enzyme catalyses a fatty acyl-[ACP] + phosphate = an acyl phosphate + holo-[ACP]. The protein operates within lipid metabolism; phospholipid metabolism. Functionally, catalyzes the reversible formation of acyl-phosphate (acyl-PO(4)) from acyl-[acyl-carrier-protein] (acyl-ACP). This enzyme utilizes acyl-ACP as fatty acyl donor, but not acyl-CoA. The polypeptide is Phosphate acyltransferase (Jannaschia sp. (strain CCS1)).